We begin with the raw amino-acid sequence, 567 residues long: GBF-interacting protein 1 (567 aa).

Disordered stretches follow at residues 70-150 (ERKK…PSGI), 164-192 (DKVD…SKES), and 545-567 (PIGP…GNNY). Composition is skewed to polar residues over residues 91–102 (FASSYTDASNGR) and 121–136 (TASS…TKPS). Residues 182 to 191 (DVVEPDKSKE) show a composition bias toward basic and acidic residues. The segment covering 550–567 (HVTNQQPQAARTNLGNNY) has biased composition (polar residues).

It belongs to the GIP1 family. As to quaternary structure, monomer, homodimer, homooligomer. Under non-reducing conditions, predominantly present in high molecular weight forms, but predominates in low molecular weight monomers under reducing conditions. Interacts with BZIP16, BZIP68 and GBF1. Interacts with LBD18. As to expression, expressed in roots, leaves, stems and flowers.

It is found in the nucleus. Functionally, plant specific protein that enhances G-box-binding factor (GBF) DNA binding activity. May function as a nuclear chaperone or lever and regulate the multimeric state of GBFs. May contribute to bZIP-mediated gene regulation. Is able to refold denatured rhodanese in vitro. Reduces DNA-binding activity of BZIP16, BZIP68 and GBF1 under non-reducing conditions through direct physical interaction. Acts as a negative co-regulator in red and blue light-mediated hypocotyl elongation. Functions to promote hypocotyl elongation during the early stages of seedling development by regulating the repression effect by BZIP16 and the activation effect by BZIP68 and GBF1 on LHCB2.4 expression. Enhances transcriptional activity of LBD18 in the EXP14 promoter. May act as a transcriptional coactivator of LBD18. This chain is GBF-interacting protein 1, found in Arabidopsis thaliana (Mouse-ear cress).